Consider the following 300-residue polypeptide: Virginiamycin B lyase (300 aa).

His231 contacts substrate. Position 270 (Glu270) interacts with Mg(2+). The Proton acceptor role is filled by His272. A Mg(2+)-binding site is contributed by Glu287.

The protein belongs to the Vgb family. In terms of assembly, monomer. The cofactor is Mg(2+).

In terms of biological role, inactivates the type B streptogramin antibiotics by linearizing the lactone ring at the ester linkage, generating a free phenylglycine carboxylate and converting the threonyl moiety into 2-amino-butenoic acid. The polypeptide is Virginiamycin B lyase (Saccharopolyspora erythraea (strain ATCC 11635 / DSM 40517 / JCM 4748 / NBRC 13426 / NCIMB 8594 / NRRL 2338)).